A 522-amino-acid polypeptide reads, in one-letter code: Maturase K (522 aa).

The protein belongs to the intron maturase 2 family. MatK subfamily.

The protein resides in the plastid. It is found in the chloroplast. In terms of biological role, usually encoded in the trnK tRNA gene intron. Probably assists in splicing its own and other chloroplast group II introns. In Micranthus junceus (Micranthus plantagineus var. junceus), this protein is Maturase K.